Reading from the N-terminus, the 400-residue chain is Lysophospholipid transporter LplT (400 aa).

12 helical membrane-spanning segments follow: residues 19–39 (VIVA…ATLA), 53–73 (VLQM…GQMA), 91–111 (AGAA…LVGI), 139–159 (LMEA…GVLA), 164–184 (IAAL…NLFI), 195–213 (SWRL…VVLW), 227–247 (LFWG…PVAL), 257–277 (YLNA…AKLV), 281–301 (TVSR…IFSL), 304–324 (ALLP…FFVV), 352–372 (NSAM…GVPA), and 373–393 (VAIG…LWIW).

This sequence belongs to the major facilitator superfamily. LplT (TC 2.A.1.42) family.

It localises to the cell inner membrane. Its function is as follows. Catalyzes the facilitated diffusion of 2-acyl-glycero-3-phosphoethanolamine (2-acyl-GPE) into the cell. This chain is Lysophospholipid transporter LplT, found in Salmonella enteritidis PT4 (strain P125109).